A 159-amino-acid chain; its full sequence is 2-C-methyl-D-erythritol 2,4-cyclodiphosphate synthase (159 aa).

The a divalent metal cation site is built by D10 and H12. Residues 10-12 and 36-37 contribute to the 4-CDP-2-C-methyl-D-erythritol 2-phosphate site; these read DVH and HS. H44 contacts a divalent metal cation. 4-CDP-2-C-methyl-D-erythritol 2-phosphate-binding positions include 58–60 and R144; that span reads DIG.

Belongs to the IspF family. As to quaternary structure, homotrimer. The cofactor is a divalent metal cation.

It carries out the reaction 4-CDP-2-C-methyl-D-erythritol 2-phosphate = 2-C-methyl-D-erythritol 2,4-cyclic diphosphate + CMP. The protein operates within isoprenoid biosynthesis; isopentenyl diphosphate biosynthesis via DXP pathway; isopentenyl diphosphate from 1-deoxy-D-xylulose 5-phosphate: step 4/6. In terms of biological role, involved in the biosynthesis of isopentenyl diphosphate (IPP) and dimethylallyl diphosphate (DMAPP), two major building blocks of isoprenoid compounds. Catalyzes the conversion of 4-diphosphocytidyl-2-C-methyl-D-erythritol 2-phosphate (CDP-ME2P) to 2-C-methyl-D-erythritol 2,4-cyclodiphosphate (ME-CPP) with a corresponding release of cytidine 5-monophosphate (CMP). This is 2-C-methyl-D-erythritol 2,4-cyclodiphosphate synthase from Paraburkholderia phymatum (strain DSM 17167 / CIP 108236 / LMG 21445 / STM815) (Burkholderia phymatum).